Consider the following 240-residue polypeptide: Eukaryotic translation initiation factor 4E-3 (240 aa).

Positions 1–51 are disordered; that stretch reads MVVTDSPVSGIMADQNIDPNTTTSPSPKEKHVSAIKAISGDEKAPSKEKKN. Residues 17 to 26 show a composition bias toward polar residues; sequence IDPNTTTSPS. Over residues 39 to 51 the composition is skewed to basic and acidic residues; sequence SGDEKAPSKEKKN. 2 EIF4G-binding regions span residues 65–68 and 75–111; these read HCFQ and FDNP…NNIH. Residues 83–88, lysine 115, and 133–134 contribute to the mRNA site; these read NQVIWG and WE. A disulfide bridge connects residues cysteine 138 and cysteine 176. Positions 159–168 are EIF4G-binding; it reads NTLLALVGEQ. Residues 183–188 and 228–232 each bind mRNA; these read RARGDR and KTLDR.

It belongs to the eukaryotic initiation factor 4E family. As to quaternary structure, EIF4F is a multi-subunit complex, the composition of which varies with external and internal environmental conditions. It is composed of at least EIF4A, EIF4E and EIF4G. EIF4E is also known to interact with other partners. In higher plants two isoforms of EIF4F have been identified, named isoform EIF4F and isoform EIF(iso)4F. Isoform EIF4F has subunits p220 and p26, whereas isoform EIF(iso)4F has subunits p82 and p28. According to the redox status, the Cys-138-Cys-176 disulfide bridge may have a role in regulating protein function by affecting its ability to bind capped mRNA.

The protein localises to the nucleus. Its subcellular location is the cytoplasm. Its function is as follows. Component of the protein complex eIF4F, which is involved in the recognition of the mRNA cap, ATP-dependent unwinding of 5'-terminal secondary structure and recruitment of mRNA to the ribosome. Recognizes and binds the 7-methylguanosine-containing mRNA cap during an early step in the initiation of protein synthesis and facilitates ribosome binding by inducing the unwinding of the mRNAs secondary structures. The protein is Eukaryotic translation initiation factor 4E-3 of Arabidopsis thaliana (Mouse-ear cress).